The primary structure comprises 286 residues: Inositol polyphosphate multikinase alpha (286 aa).

The disordered stretch occupies residues 1 to 22; it reads MQLKVPEHQVAGHIAKDGKPGP.

It belongs to the inositol phosphokinase (IPK) family. Phosphorylated. As to expression, detected in leaves, stems, roots, siliques and flowers. Highly expressed in root tissues, anthers, the stigma, pollen grains and growing pollen tubes.

It localises to the nucleus. Its subcellular location is the cell membrane. It carries out the reaction 1D-myo-inositol 1,4,5-trisphosphate + 2 ATP = 1D-myo-inositol 1,3,4,5,6-pentakisphosphate + 2 ADP + 2 H(+). The catalysed reaction is 1D-myo-inositol 1,3,4,6-tetrakisphosphate + ATP = 1D-myo-inositol 1,3,4,5,6-pentakisphosphate + ADP + H(+). Its function is as follows. Inositol phosphate kinase with a broad substrate specificity. Phosphorylates inositol 1,4,5-trisphosphate (Ins(1,4,5)P3), inositol 1,4,5,6-tetrakisphosphate (Ins(1,4,5,6)P4), inositol 1,3,4,5-tetrakisphosphate (Ins(1,3,4,5)P4), inositol 1,3,4,6-tetrakisphosphate (Ins(1,3,4,6)P4) and inositol 1,2,3,4,6-pentakisphosphate (Ins(1,2,3,4,6)P5) but not inositol 1,4-bisphosphate (Ins(1,4)P2), inositol 1,3,4-trisphosphate (Ins(1,3,4)P3), inositol 1,2,6-trisphosphate (Ins(1,2,6)P3), inositol 3,4,5,6-tetrakisphosphate (Ins(3,4,5,6)P4), inositol 1,3,4,5,6-pentakisphosphate (Ins(1,3,4,5,6)P5), inositol 1,2,4,5,6-pentakisphosphate (Ins(1,2,4,5,6)P5) or inositol hexakisphosphate (InsP6). Regulates pollen and root development probably through the regulation of InsP3-mediated calcium accumulation. The chain is Inositol polyphosphate multikinase alpha (IPK2a) from Arabidopsis thaliana (Mouse-ear cress).